We begin with the raw amino-acid sequence, 231 residues long: Flagellar L-ring protein 2 (231 aa).

Positions 1–15 are cleaved as a signal peptide; sequence MKNLILILPLLMLTG. C16 carries the N-palmitoyl cysteine lipid modification. A lipid anchor (S-diacylglycerol cysteine) is attached at C16. Residues 30 to 54 are disordered; it reads SPVGSGLRTQADPIPVTPRMRTPVS.

This sequence belongs to the FlgH family. The basal body constitutes a major portion of the flagellar organelle and consists of four rings (L,P,S, and M) mounted on a central rod.

It is found in the cell outer membrane. Its subcellular location is the bacterial flagellum basal body. Assembles around the rod to form the L-ring and probably protects the motor/basal body from shearing forces during rotation. This chain is Flagellar L-ring protein 2, found in Bradyrhizobium diazoefficiens (strain JCM 10833 / BCRC 13528 / IAM 13628 / NBRC 14792 / USDA 110).